Consider the following 183-residue polypeptide: Photosystem I assembly protein Ycf4 (183 aa).

2 helical membrane passes run 23–43 (WASV…SSYF) and 64–84 (VMSF…LTII).

Belongs to the Ycf4 family.

The protein resides in the plastid. Its subcellular location is the chloroplast thylakoid membrane. In terms of biological role, seems to be required for the assembly of the photosystem I complex. This chain is Photosystem I assembly protein Ycf4, found in Stigeoclonium helveticum (Green alga).